The sequence spans 904 residues: Pantothenate kinase 2 (904 aa).

The disordered stretch occupies residues 1 to 56 (MAANNNSDPILDEGGGGGVKHEAVGEAGEGKGGGGGAAATQAPAAMLPRSGSRPQL). The pantothenate kinase stretch occupies residues 1-472 (MAANNNSDPI…LGDLNEKISW (472 aa)). The 4'-phosphopantetheine phosphatase stretch occupies residues 473-904 (MEKFVQKGTQ…DCICKFEPVP (432 aa)). Residues Asp735, Asn736, and Asp771 each contribute to the Mn(2+) site. The short motif at 855 to 859 (EGMGR) is the Subfamily II EGMGR motif element.

The protein in the N-terminal section; belongs to the type II pantothenate kinase family. In the C-terminal section; belongs to the damage-control phosphatase family. Phosphopantetheine phosphatase II subfamily. It depends on Mn(2+) as a cofactor. Ni(2+) is required as a cofactor.

It carries out the reaction (R)-pantothenate + ATP = (R)-4'-phosphopantothenate + ADP + H(+). The enzyme catalyses (R)-4'-phosphopantothenate + H2O = (R)-pantothenate + phosphate. It catalyses the reaction (R)-4'-phosphopantetheine + H2O = (R)-pantetheine + phosphate. The catalysed reaction is (R)-4'-phosphopantetheine sulfonate + H2O = (R)-pantetheine sulfonate + phosphate. It participates in cofactor biosynthesis; coenzyme A biosynthesis; CoA from (R)-pantothenate: step 1/5. Catalyzes the phosphorylation of pantothenate the first step in CoA biosynthesis. May play a role in the physiological regulation of the intracellular CoA concentration. Functionally redudant with PANK1. The phosphatase activity shows preference for normal or oxidatively damaged intermediates of 4'-phosphopantetheine, which provides strong indirect evidence that the phosphatase activity pre-empts damage in the CoA pathway. Hydrolyzing excess 4'-phosphopantetheine could constitute a directed overflow mechanism to prevent its oxidation to the S-sulfonate, sulfonate, or other forms. Hydrolyzing 4'-phosphopantetheine sulfonate or S-sulfonate would forestall their conversion to inactive forms of CoA and acyl carrier protein. The chain is Pantothenate kinase 2 from Oryza sativa subsp. japonica (Rice).